The chain runs to 751 residues: MAISSKEQETKKVKISVDKNPVDTSFEKWAQPGHFSRTLAKGPRTTTWIWNLHADAHDFDSQTSSLEEVSRKIFSAHFGQLSVIFLWLSGMYFHGARFSNYVAWLSNPTGIKPSAQVVWPIVGQEILNGDVGGGFQGVQVTSGWFQLWRASGITTEFQLYCTAIGGLAMAALMLFAGWFHYHKAAPKLEWFQNVESMMNHHLAGLLGLGCLGWTGHQIHLSLPINKLLDSGVSPQEIPLPHEFLINRELMAQLYPSFSKGLVPFFTLNWAEYSDFLTFKGGLNPVTGGLWLSDTAHHHLALAVLFLAAGHMYRTNWGIGHSMKEILEAHKGPFTGNGHEGLYEILTTSWHAQLAINLAMMGSLSIIVAHHMYAMPPYPYIATDYPTQLSLFTHHMWIGGFCIVGAGAHASIFMVRDYNPAENYNNLRSSSRHRDAIVSHLNWVCIFLGFHSFGLYIHNDTMRALGRSQDMFSDTAIQLQPIFAQWVQSIHTLAPGNTAPNALATASYAFGGDIVSVGNKVAMMPISLGTADFLVHHIHAFTIHVTVLILVKGFLFSRNSRLIPDKANLGFRFPCDGPGRGGTCQVSGWDHVFLGLFWMYNSLSVAIFHFSWKMQSDVWGSVSPSGNVSHITGGNFAQSAITINGWLRDFLWAQASQVIQSYGSALSAYGLIFLAAHFVWAFSLMFLFSGRGYWQELIESIVWAHNKIKVAPAIQPRALSITQGRAVGVAHYLLGGIGTTWAFFLARIISVG.

A run of 8 helical transmembrane segments spans residues 73-96 (IFSAHFGQLSVIFLWLSGMYFHGA), 159-182 (LYCTAIGGLAMAALMLFAGWFHYH), 198-222 (MNHHLAGLLGLGCLGWTGHQIHLSL), 294-312 (TAHHHLALAVLFLAAGHMY), 349-372 (WHAQLAINLAMMGSLSIIVAHHMY), 388-414 (LSLFTHHMWIGGFCIVGAGAHASIFMV), 435-457 (AIVSHLNWVCIFLGFHSFGLYIH), and 532-550 (FLVHHIHAFTIHVTVLILV). [4Fe-4S] cluster-binding residues include Cys574 and Cys583. 2 helical membrane passes run 590-611 (HVFLGLFWMYNSLSVAIFHFSW) and 665-687 (LSAYGLIFLAAHFVWAFSLMFLF). His676 contacts chlorophyll a'. Chlorophyll a-binding residues include Met684 and Tyr692. Phylloquinone is bound at residue Trp693. A helical membrane pass occupies residues 725 to 745 (AVGVAHYLLGGIGTTWAFFLA).

This sequence belongs to the PsaA/PsaB family. As to quaternary structure, the PsaA/B heterodimer binds the P700 chlorophyll special pair and subsequent electron acceptors. PSI consists of a core antenna complex that captures photons, and an electron transfer chain that converts photonic excitation into a charge separation. The eukaryotic PSI reaction center is composed of at least 11 subunits. The cofactor is P700 is a chlorophyll a/chlorophyll a' dimer, A0 is one or more chlorophyll a, A1 is one or both phylloquinones and FX is a shared 4Fe-4S iron-sulfur center..

Its subcellular location is the plastid. The protein localises to the chloroplast thylakoid membrane. The catalysed reaction is reduced [plastocyanin] + hnu + oxidized [2Fe-2S]-[ferredoxin] = oxidized [plastocyanin] + reduced [2Fe-2S]-[ferredoxin]. Functionally, psaA and PsaB bind P700, the primary electron donor of photosystem I (PSI), as well as the electron acceptors A0, A1 and FX. PSI is a plastocyanin/cytochrome c6-ferredoxin oxidoreductase, converting photonic excitation into a charge separation, which transfers an electron from the donor P700 chlorophyll pair to the spectroscopically characterized acceptors A0, A1, FX, FA and FB in turn. Oxidized P700 is reduced on the lumenal side of the thylakoid membrane by plastocyanin or cytochrome c6. This chain is Photosystem I P700 chlorophyll a apoprotein A1, found in Pyropia yezoensis (Susabi-nori).